Here is a 159-residue protein sequence, read N- to C-terminus: MIYEFFNKNGYCTNNIPRKYIVKLKHNDDVKDFERYEFVTYTFRSFKYIYEMFYKKQKKVLHLEKIKEYLDERALAHWIMDDGGYTGAGIRIATNAFTLKEVMFLKELLEDKFKLKCTIQEIYIKDKWSIYITKDSMTHLISIIKPYMHPSMYYKLGIK.

It belongs to the LAGLIDADG endonuclease family.

Its subcellular location is the mitochondrion. Its function is as follows. Mitochondrial DNA endonuclease involved in intron homing. The polypeptide is Intron-encoded endonuclease ai4 (ai4) (Dictyostelium discoideum (Social amoeba)).